The sequence spans 388 residues: Alanine racemase (388 aa).

Residue K39 is the Proton acceptor; specific for D-alanine of the active site. K39 bears the N6-(pyridoxal phosphate)lysine mark. At K129 the chain carries N6-carboxylysine. R136 is a substrate binding site. The Proton acceptor; specific for L-alanine role is filled by Y265. Residue M312 participates in substrate binding.

The protein belongs to the alanine racemase family. As to quaternary structure, homodimer. Requires pyridoxal 5'-phosphate as cofactor.

It catalyses the reaction L-alanine = D-alanine. It participates in amino-acid biosynthesis; D-alanine biosynthesis; D-alanine from L-alanine: step 1/1. Its activity is regulated as follows. Inhibited by acetate and propionate. Irreversibly inhibited by cycloserine. Its function is as follows. Catalyzes the interconversion of L-alanine and D-alanine. Also weakly active on serine. This is Alanine racemase (alr) from Geobacillus stearothermophilus (Bacillus stearothermophilus).